A 241-amino-acid polypeptide reads, in one-letter code: SURF1-like protein (241 aa).

2 helical membrane-spanning segments follow: residues 5 to 25 (LTVL…LNRL) and 199 to 219 (LEYA…YRIY).

This sequence belongs to the SURF1 family.

The protein resides in the cell membrane. The polypeptide is SURF1-like protein (Rickettsia bellii (strain RML369-C)).